A 490-amino-acid polypeptide reads, in one-letter code: Cytochrome P450 2C2 (490 aa).

Cysteine 435 serves as a coordination point for heme.

This sequence belongs to the cytochrome P450 family. Requires heme as cofactor.

It localises to the endoplasmic reticulum membrane. The protein resides in the microsome membrane. It carries out the reaction an organic molecule + reduced [NADPH--hemoprotein reductase] + O2 = an alcohol + oxidized [NADPH--hemoprotein reductase] + H2O + H(+). Functionally, cytochromes P450 are a group of heme-thiolate monooxygenases. In liver microsomes, this enzyme is involved in an NADPH-dependent electron transport pathway. It oxidizes a variety of structurally unrelated compounds, including steroids, fatty acids, and xenobiotics. In the epoxidation of arachidonic acid it generates only 14,15- and 11,12-cis-epoxyeicosatrienoic acids. This Oryctolagus cuniculus (Rabbit) protein is Cytochrome P450 2C2 (CYP2C2).